Here is a 108-residue protein sequence, read N- to C-terminus: Virulence-associated protein I (108 aa).

One can recognise an HTH cro/C1-type domain in the interval 19-74; the sequence is LREEYLKPMGLSAHALAKALHVSPSRINEIVREQRGITADTALRLVRYFGGDAQSW. A DNA-binding region (H-T-H motif) is located at residues 30-49; sequence SAHALAKALHVSPSRINEIV.

This sequence belongs to the VapA/VapI family.

The polypeptide is Virulence-associated protein I (vapI) (Dichelobacter nodosus (Bacteroides nodosus)).